The sequence spans 493 residues: Glutamyl-tRNA(Gln) amidotransferase subunit A (493 aa).

Active-site charge relay system residues include Lys-78 and Ser-159. Ser-183 serves as the catalytic Acyl-ester intermediate.

Belongs to the amidase family. GatA subfamily. Heterotrimer of A, B and C subunits.

The enzyme catalyses L-glutamyl-tRNA(Gln) + L-glutamine + ATP + H2O = L-glutaminyl-tRNA(Gln) + L-glutamate + ADP + phosphate + H(+). Its function is as follows. Allows the formation of correctly charged Gln-tRNA(Gln) through the transamidation of misacylated Glu-tRNA(Gln) in organisms which lack glutaminyl-tRNA synthetase. The reaction takes place in the presence of glutamine and ATP through an activated gamma-phospho-Glu-tRNA(Gln). This Sphingopyxis alaskensis (strain DSM 13593 / LMG 18877 / RB2256) (Sphingomonas alaskensis) protein is Glutamyl-tRNA(Gln) amidotransferase subunit A.